Here is a 316-residue protein sequence, read N- to C-terminus: Lys-63-specific deubiquitinase BRCC36 (316 aa).

Alanine 2 is subject to N-acetylalanine. The 168-residue stretch at 12–179 folds into the MPN domain; it reads VHLESDAFLV…YTCFQSIQAQ (168 aa). Residues histidine 122, histidine 124, and aspartate 135 each contribute to the Zn(2+) site. A JAMM motif motif is present at residues 122-135; the sequence is HSHPHITVWPSHVD. Serine 258 bears the Phosphoserine mark.

The protein belongs to the peptidase M67A family. BRCC36 subfamily. Component of the ARISC complex, at least composed of UIMC1/RAP80, ABRAXAS1, BRCC3/BRCC36, BABAM2 and BABAM1/NBA1. Component of the BRCA1-A complex, at least composed of BRCA1, BARD1, UIMC1/RAP80, ABRAXAS1, BRCC3/BRCC36, BABAM2 and BABAM1/NBA1. In the BRCA1-A complex, interacts directly with ABRAXAS1 and BABAM2. Component of the BRISC complex, at least composed of ABRAXAS2, BRCC3/BRCC36, BABAM2 and BABAM1/NBA1. Identified in a complex with SHMT2 and the other subunits of the BRISC complex. In the BRISC complex, interacts directly with ABRAXAS2. Identified in a complex with ABRAXAS2 and NUMA1. The BRISC complex interacts with the CSN complex. Component of the BRCA1/BRCA2 containing complex (BRCC), which also contains BRCA1, BRCA2, BARD1, BABAM2 and RAD51. BRCC is a ubiquitin E3 ligase complex that enhances cellular survival following DNA damage. Interacts with BRCA1. Binds polyubiquitin. Interacts with PWWP2B. Interacts with HDAC1; this interaction is enhanced in the presence of PWWP2B. Zn(2+) serves as cofactor.

Its subcellular location is the nucleus. It localises to the cytoplasm. The protein resides in the cytoskeleton. The protein localises to the spindle pole. Its function is as follows. Metalloprotease that specifically cleaves 'Lys-63'-linked polyubiquitin chains. Does not have activity toward 'Lys-48'-linked polyubiquitin chains. Component of the BRCA1-A complex, a complex that specifically recognizes 'Lys-63'-linked ubiquitinated histones H2A and H2AX at DNA lesions sites, leading to target the BRCA1-BARD1 heterodimer to sites of DNA damage at double-strand breaks (DSBs). In the BRCA1-A complex, it specifically removes 'Lys-63'-linked ubiquitin on histones H2A and H2AX, antagonizing the RNF8-dependent ubiquitination at double-strand breaks (DSBs). Catalytic subunit of the BRISC complex, a multiprotein complex that specifically cleaves 'Lys-63'-linked ubiquitin in various substrates. Mediates the specific 'Lys-63'-specific deubiquitination associated with the COP9 signalosome complex (CSN), via the interaction of the BRISC complex with the CSN complex. The BRISC complex is required for normal mitotic spindle assembly and microtubule attachment to kinetochores via its role in deubiquitinating NUMA1. Plays a role in interferon signaling via its role in the deubiquitination of the interferon receptor IFNAR1; deubiquitination increases IFNAR1 activity by enhancing its stability and cell surface expression. Acts as a regulator of the NLRP3 inflammasome by mediating deubiquitination of NLRP3, leading to NLRP3 inflammasome assembly. Down-regulates the response to bacterial lipopolysaccharide (LPS) via its role in IFNAR1 deubiquitination. Deubiquitinates HDAC1 and PWWP2B leading to their stabilization. The polypeptide is Lys-63-specific deubiquitinase BRCC36 (BRCC3) (Callithrix jacchus (White-tufted-ear marmoset)).